A 455-amino-acid polypeptide reads, in one-letter code: Pup--protein ligase (455 aa).

Glutamate 10 lines the Mg(2+) pocket. Arginine 55 contributes to the ATP binding site. Mg(2+) is bound at residue tyrosine 57. Aspartate 59 (proton acceptor) is an active-site residue. Residue glutamate 65 participates in Mg(2+) binding. Positions 68 and 422 each coordinate ATP.

This sequence belongs to the Pup ligase/Pup deamidase family. Pup-conjugating enzyme subfamily.

The enzyme catalyses ATP + [prokaryotic ubiquitin-like protein]-L-glutamate + [protein]-L-lysine = ADP + phosphate + N(6)-([prokaryotic ubiquitin-like protein]-gamma-L-glutamyl)-[protein]-L-lysine.. The protein operates within protein degradation; proteasomal Pup-dependent pathway. It functions in the pathway protein modification; protein pupylation. In terms of biological role, catalyzes the covalent attachment of the prokaryotic ubiquitin-like protein modifier Pup to the proteasomal substrate proteins, thereby targeting them for proteasomal degradation. This tagging system is termed pupylation. The ligation reaction involves the side-chain carboxylate of the C-terminal glutamate of Pup and the side-chain amino group of a substrate lysine. In Sanguibacter keddieii (strain ATCC 51767 / DSM 10542 / NCFB 3025 / ST-74), this protein is Pup--protein ligase.